The following is a 307-amino-acid chain: Nicotinamide/nicotinic acid mononucleotide adenylyltransferase 2 (307 aa).

Positions 16 and 17 each coordinate NAD(+). Histidine 24 is an ATP binding site. 7 residues coordinate NAD(+): tryptophan 92, threonine 95, glycine 200, aspartate 202, leucine 212, tryptophan 213, and arginine 232. ATP is bound at residue 271 to 274 (TKSR).

This sequence belongs to the eukaryotic NMN adenylyltransferase family. Monomer. Requires Mg(2+) as cofactor.

The protein localises to the golgi apparatus membrane. The protein resides in the cytoplasmic vesicle membrane. It is found in the cytoplasm. Its subcellular location is the cell projection. It localises to the axon. It catalyses the reaction beta-nicotinamide D-ribonucleotide + ATP + H(+) = diphosphate + NAD(+). It carries out the reaction nicotinate beta-D-ribonucleotide + ATP + H(+) = deamido-NAD(+) + diphosphate. It functions in the pathway cofactor biosynthesis; NAD(+) biosynthesis; NAD(+) from nicotinamide D-ribonucleotide: step 1/1. It participates in cofactor biosynthesis; NAD(+) biosynthesis; deamido-NAD(+) from nicotinate D-ribonucleotide: step 1/1. Functionally, nicotinamide/nicotinate-nucleotide adenylyltransferase that acts as an axon maintenance factor. Axon survival factor required for the maintenance of healthy axons: acts by delaying Wallerian axon degeneration, an evolutionarily conserved process that drives the loss of damaged axons. Catalyzes the formation of NAD(+) from nicotinamide mononucleotide (NMN) and ATP. Can also use the deamidated form; nicotinic acid mononucleotide (NaMN) as substrate but with a lower efficiency. Also catalyzes the reverse reaction, i.e. the pyrophosphorolytic cleavage of NAD(+). For the pyrophosphorolytic activity prefers NAD(+), NADH and NaAD as substrates and degrades nicotinic acid adenine dinucleotide phosphate (NHD) less effectively. Also acts as an activator of ADP-ribosylation by supporting the catalytic activity of PARP16 and promoting mono-ADP-ribosylation of ribosomes by PARP16. May be involved in the maintenance of axonal integrity. This Xenopus tropicalis (Western clawed frog) protein is Nicotinamide/nicotinic acid mononucleotide adenylyltransferase 2 (nmnat2).